The chain runs to 94 residues: Aspartyl/glutamyl-tRNA(Asn/Gln) amidotransferase subunit C (94 aa).

The interval 72 to 94 is disordered; sequence PREKALQGAPEVSEGQFKVPRVV.

Belongs to the GatC family. Heterotrimer of A, B and C subunits.

It carries out the reaction L-glutamyl-tRNA(Gln) + L-glutamine + ATP + H2O = L-glutaminyl-tRNA(Gln) + L-glutamate + ADP + phosphate + H(+). The enzyme catalyses L-aspartyl-tRNA(Asn) + L-glutamine + ATP + H2O = L-asparaginyl-tRNA(Asn) + L-glutamate + ADP + phosphate + 2 H(+). Functionally, allows the formation of correctly charged Asn-tRNA(Asn) or Gln-tRNA(Gln) through the transamidation of misacylated Asp-tRNA(Asn) or Glu-tRNA(Gln) in organisms which lack either or both of asparaginyl-tRNA or glutaminyl-tRNA synthetases. The reaction takes place in the presence of glutamine and ATP through an activated phospho-Asp-tRNA(Asn) or phospho-Glu-tRNA(Gln). The protein is Aspartyl/glutamyl-tRNA(Asn/Gln) amidotransferase subunit C of Moorella thermoacetica (strain ATCC 39073 / JCM 9320).